Reading from the N-terminus, the 66-residue chain is Large ribosomal subunit protein uL29 (66 aa).

This sequence belongs to the universal ribosomal protein uL29 family.

The chain is Large ribosomal subunit protein uL29 from Borrelia garinii subsp. bavariensis (strain ATCC BAA-2496 / DSM 23469 / PBi) (Borreliella bavariensis).